Consider the following 234-residue polypeptide: Nuclear transcription factor Y subunit C-1 (234 aa).

Disordered stretches follow at residues 1–20 (MDTN…PPPP) and 205–234 (SVWQ…DGQG). Over residues 7 to 20 (QPPPSAAGIPPPPP) the composition is skewed to pro residues. A compositionally biased stretch (low complexity) spans 209–219 (TSTGTGDDVSY). Gly residues predominate over residues 220–234 (GSGGSSGQGNLDGQG).

The protein belongs to the NFYC/HAP5 subunit family. Heterotrimeric transcription factor composed of three components, NF-YA, NF-YB and NF-YC. NF-YB and NF-YC must interact and dimerize for NF-YA association and DNA binding. Ubiquitous. Present in etiolated seedlings.

It is found in the nucleus. Stimulates the transcription of various genes by recognizing and binding to a CCAAT motif in promoters. This is Nuclear transcription factor Y subunit C-1 (NFYC1) from Arabidopsis thaliana (Mouse-ear cress).